Consider the following 280-residue polypeptide: Hydroxyethylthiazole kinase (280 aa).

Residue Met50 participates in substrate binding. Residues Lys125 and Thr178 each contribute to the ATP site. Substrate is bound at residue Gly205.

This sequence belongs to the Thz kinase family. Mg(2+) serves as cofactor.

It catalyses the reaction 5-(2-hydroxyethyl)-4-methylthiazole + ATP = 4-methyl-5-(2-phosphooxyethyl)-thiazole + ADP + H(+). It functions in the pathway cofactor biosynthesis; thiamine diphosphate biosynthesis; 4-methyl-5-(2-phosphoethyl)-thiazole from 5-(2-hydroxyethyl)-4-methylthiazole: step 1/1. In terms of biological role, catalyzes the phosphorylation of the hydroxyl group of 4-methyl-5-beta-hydroxyethylthiazole (THZ). The protein is Hydroxyethylthiazole kinase of Lacticaseibacillus casei (strain BL23) (Lactobacillus casei).